The sequence spans 234 residues: Enolase-phosphatase E1 (234 aa).

Mg(2+)-binding residues include aspartate 13 and glutamate 15. Residues 127 to 128 (SS) and lysine 164 each bind substrate. Aspartate 191 contributes to the Mg(2+) binding site.

It belongs to the HAD-like hydrolase superfamily. MasA/MtnC family. As to quaternary structure, monomer. Requires Mg(2+) as cofactor.

The protein resides in the cytoplasm. Its subcellular location is the nucleus. The enzyme catalyses 5-methylsulfanyl-2,3-dioxopentyl phosphate + H2O = 1,2-dihydroxy-5-(methylsulfanyl)pent-1-en-3-one + phosphate. It functions in the pathway amino-acid biosynthesis; L-methionine biosynthesis via salvage pathway; L-methionine from S-methyl-5-thio-alpha-D-ribose 1-phosphate: step 3/6. It participates in amino-acid biosynthesis; L-methionine biosynthesis via salvage pathway; L-methionine from S-methyl-5-thio-alpha-D-ribose 1-phosphate: step 4/6. Its function is as follows. Bifunctional enzyme that catalyzes the enolization of 2,3-diketo-5-methylthiopentyl-1-phosphate (DK-MTP-1-P) into the intermediate 2-hydroxy-3-keto-5-methylthiopentenyl-1-phosphate (HK-MTPenyl-1-P), which is then dephosphorylated to form the acireductone 1,2-dihydroxy-3-keto-5-methylthiopentene (DHK-MTPene). The chain is Enolase-phosphatase E1 from Podospora anserina (strain S / ATCC MYA-4624 / DSM 980 / FGSC 10383) (Pleurage anserina).